The following is a 513-amino-acid chain: Protein CYCLOPS (513 aa).

A disordered region spans residues 327–435; that stretch reads QIHGGTASGE…ERSRKMAEAK (109 aa). Over residues 334 to 347 the composition is skewed to low complexity; sequence SGEPSQSESSAAAP. The segment covering 359–381 has biased composition (polar residues); the sequence is PSNSSQTLCDSSWKQVGESTQNR. A compositionally biased stretch (basic and acidic residues) spans 384–396; sequence GVREQIMDNLKDD. Short sequence motifs (nuclear localization signal) lie at residues 397-401 and 421-424; these read RKRKR and KKRR. Residues 447-513 adopt a coiled-coil conformation; sequence MQAVMKRCEN…ERLLSETGKI (67 aa).

This sequence belongs to the CYCLOPS family.

It localises to the nucleus. In terms of biological role, involved symbiotic signaling. Required for root infection by symbiotic rhizobia, infection thread (IT) formation, and nodule development. Required for symbiosome formation (i.e. the release of the bacteria from the ITs) and subsequent symbiosome development. Involved in arbuscular mycorrhizal (AM) symbiosis. The chain is Protein CYCLOPS from Pisum sativum (Garden pea).